The chain runs to 336 residues: Telomere-binding protein cav (336 aa).

The required for binding to Su(var)205 stretch occupies residues 107–328 (RKKMVQPYPE…TITFQNSESE (222 aa)). 2 disordered regions span residues 137 to 158 (RLDR…SPAR) and 199 to 218 (SSDL…SEFQ). 2 consecutive short sequence motifs (su(var)205-binding Pro-containing repeat) follow at residues 225–231 (PETAINE) and 289–295 (PETEMNE). Residues 308–327 (MSIGPSIDSEGTITFQNSES) are compositionally biased toward polar residues. Residues 308 to 336 (MSIGPSIDSEGTITFQNSESEPIDVDSIA) are disordered.

Interacts (via C-terminus) with Su(var)205 dimer (via hinge and chromoshadow domain) and with moi to form the terminin, telomere-capping, complex. Interacts with HP6, which is also part of the terminin complex.

The protein resides in the nucleus. The protein localises to the chromosome. Its subcellular location is the telomere. Functionally, binds to chromosome ends in a sequence-dependent manner and is required for telomere capping. The sequence is that of Telomere-binding protein cav from Drosophila sechellia (Fruit fly).